Here is a 392-residue protein sequence, read N- to C-terminus: Chalcone synthase B (392 aa).

The active site involves Cys-167.

Belongs to the thiolase-like superfamily. Chalcone/stilbene synthases family. As to expression, expressed at low level in seedlings after illumination with UV light. No expression in flowers or tissue culture.

The catalysed reaction is (E)-4-coumaroyl-CoA + 3 malonyl-CoA + 3 H(+) = 2',4,4',6'-tetrahydroxychalcone + 3 CO2 + 4 CoA. Its pathway is secondary metabolite biosynthesis; flavonoid biosynthesis. The primary product of this enzyme is 4,2',4',6'-tetrahydroxychalcone (also termed naringenin-chalcone or chalcone) which can under specific conditions spontaneously isomerize into naringenin. In Petunia hybrida (Petunia), this protein is Chalcone synthase B (CHSB).